A 211-amino-acid chain; its full sequence is 1-deoxy-D-xylulose 5-phosphate reductoisomerase (211 aa).

Residue Asp-14 coordinates Mn(2+). The 1-deoxy-D-xylulose 5-phosphate site is built by Ser-15, Glu-16, Ser-40, His-63, Ser-76, Asn-81, Lys-82, and Glu-85. Glu-16 provides a ligand contact to Mn(2+). Mn(2+) is bound at residue Glu-85.

The protein belongs to the DXR family. It depends on Mn(2+) as a cofactor. Requires Mg(2+) as cofactor. Mostly expressed in flowers and, to a lower extent, in leaves.

The protein localises to the plastid. The protein resides in the chloroplast stroma. It carries out the reaction 2-C-methyl-D-erythritol 4-phosphate + NADP(+) = 1-deoxy-D-xylulose 5-phosphate + NADPH + H(+). Its pathway is isoprenoid biosynthesis; isopentenyl diphosphate biosynthesis via DXP pathway; isopentenyl diphosphate from 1-deoxy-D-xylulose 5-phosphate: step 1/6. Its function is as follows. Enzyme of the plastid non-mevalonate pathway for isoprenoid biosynthesis that catalyzes the NADPH-dependent rearrangement and reduction of 1-deoxy-D-xylulose-5-phosphate (DXP) to 2-C-methyl-D-erythritol 4-phosphate (MEP). Required for chloroplast development. The sequence is that of 1-deoxy-D-xylulose 5-phosphate reductoisomerase from Thymus vulgaris (Thyme).